Here is a 485-residue protein sequence, read N- to C-terminus: Sulfate adenylyltransferase subunit 1 (485 aa).

Positions 17-232 constitute a tr-type G domain; sequence KDLLRLLTAG…LETVHIDNDH (216 aa). The G1 stretch occupies residues 26-33; sequence GSVDDGKS. 26–33 lines the GTP pocket; the sequence is GSVDDGKS. Residues 84-88 are G2; it reads GITID. The tract at residues 105–108 is G3; that stretch reads DTPG. Residues 105-109 and 160-163 contribute to the GTP site; these read DTPGH and NKMD. The G4 stretch occupies residues 160–163; that stretch reads NKMD. A G5 region spans residues 197 to 199; the sequence is SAL.

The protein belongs to the TRAFAC class translation factor GTPase superfamily. Classic translation factor GTPase family. CysN/NodQ subfamily. Heterodimer composed of CysD, the smaller subunit, and CysN.

It catalyses the reaction sulfate + ATP + H(+) = adenosine 5'-phosphosulfate + diphosphate. It functions in the pathway sulfur metabolism; hydrogen sulfide biosynthesis; sulfite from sulfate: step 1/3. Its function is as follows. With CysD forms the ATP sulfurylase (ATPS) that catalyzes the adenylation of sulfate producing adenosine 5'-phosphosulfate (APS) and diphosphate, the first enzymatic step in sulfur assimilation pathway. APS synthesis involves the formation of a high-energy phosphoric-sulfuric acid anhydride bond driven by GTP hydrolysis by CysN coupled to ATP hydrolysis by CysD. This Bacteroides thetaiotaomicron (strain ATCC 29148 / DSM 2079 / JCM 5827 / CCUG 10774 / NCTC 10582 / VPI-5482 / E50) protein is Sulfate adenylyltransferase subunit 1.